We begin with the raw amino-acid sequence, 350 residues long: 2-oxoglutarate-dependent ethylene/succinate-forming enzyme (350 aa).

The Fe2OG dioxygenase domain occupies 166 to 286 (GWHHMRVLRF…RFACAYFHEP (121 aa)). Fe cation-binding residues include histidine 189 and histidine 268.

The protein belongs to the iron/ascorbate-dependent oxidoreductase family. In terms of assembly, monomer. Fe(2+) serves as cofactor.

The enzyme catalyses 2-oxoglutarate + O2 + 2 H(+) = ethene + 3 CO2 + H2O. The catalysed reaction is L-arginine + 2-oxoglutarate + O2 = guanidine + L-glutamate 5-semialdehyde + succinate + CO2. Its pathway is alkene biosynthesis; ethylene biosynthesis via 2-oxoglutarate. Simultaneously catalyzes two reactions, namely formation of ethylene and of succinate from 2-oxoglutarate. This is 2-oxoglutarate-dependent ethylene/succinate-forming enzyme (efe) from Pseudomonas amygdali pv. sesami (Pseudomonas syringae pv. sesami).